A 712-amino-acid chain; its full sequence is Golgin candidate 3 (712 aa).

Residues 23–49 form a disordered region; it reads DEEEDDLHKYGSANGVSNSDRRNSSGF. Residues 36 to 49 are compositionally biased toward polar residues; sequence NGVSNSDRRNSSGF. Positions 65–134 form a coiled coil; sequence AHHEIERYKA…LKEARTDISR (70 aa). Positions 135 to 150 are enriched in polar residues; it reads GSNNYAIKGNNDQSPN. 2 disordered regions span residues 135-176 and 306-347; these read GSNN…TDSF and ESRK…MEQS. Coiled coils occupy residues 197-313, 340-558, and 659-690; these read QATE…LTNS, GKEE…LNRM, and LKDAEERERREAEEAAASKAKQDSERTRQEAA. Residues 328–344 are compositionally biased toward basic and acidic residues; that stretch reads STLDKEKPESFPGKEEM. Residues 557–608 form the GRIP domain; the sequence is RMSMESDYLVDRRIVIKLLVTYFQKNHNKEVLDLMVRMLGFSEEDKERIGAA. A disordered region spans residues 666 to 712; it reads ERREAEEAAASKAKQDSERTRQEAALHDSEFSTVPLRSSESNQRLSR. Over residues 678–695 the composition is skewed to basic and acidic residues; sequence AKQDSERTRQEAALHDSE. Over residues 696–712 the composition is skewed to polar residues; sequence FSTVPLRSSESNQRLSR.

Interacts with ARF1; preferentially with the active form of the protein.

It localises to the golgi apparatus. The protein localises to the endosome. In terms of biological role, golgi matrix protein playing a role in tethering of vesicles to Golgi membranes and in maintaining the overall structure of the Golgi apparatus. The chain is Golgin candidate 3 (GC3) from Arabidopsis thaliana (Mouse-ear cress).